Consider the following 1351-residue polypeptide: DNA-directed RNA polymerase subunit beta' (1351 aa).

Positions 70, 72, 85, and 88 each coordinate Zn(2+). Mg(2+) is bound by residues aspartate 460, aspartate 462, and aspartate 464. Zn(2+) is bound by residues cysteine 801, cysteine 875, cysteine 882, and cysteine 885.

It belongs to the RNA polymerase beta' chain family. In terms of assembly, the RNAP catalytic core consists of 2 alpha, 1 beta, 1 beta' and 1 omega subunit. When a sigma factor is associated with the core the holoenzyme is formed, which can initiate transcription. The cofactor is Mg(2+). Requires Zn(2+) as cofactor.

It catalyses the reaction RNA(n) + a ribonucleoside 5'-triphosphate = RNA(n+1) + diphosphate. In terms of biological role, DNA-dependent RNA polymerase catalyzes the transcription of DNA into RNA using the four ribonucleoside triphosphates as substrates. The protein is DNA-directed RNA polymerase subunit beta' of Syntrophobacter fumaroxidans (strain DSM 10017 / MPOB).